A 351-amino-acid polypeptide reads, in one-letter code: Dihydroorotate dehydrogenase (quinone) (351 aa).

FMN is bound by residues A67–K71 and T91. K71 contacts substrate. N116 to F120 contributes to the substrate binding site. Residues N145 and N178 each contribute to the FMN site. N178 contributes to the substrate binding site. Residue S181 is the Nucleophile of the active site. A substrate-binding site is contributed by N183. Positions 214 and 242 each coordinate FMN. Residue N243 to T244 coordinates substrate. FMN is bound by residues G262, G291, and Y312–S313.

The protein belongs to the dihydroorotate dehydrogenase family. Type 2 subfamily. In terms of assembly, monomer. The cofactor is FMN.

It is found in the cell membrane. It catalyses the reaction (S)-dihydroorotate + a quinone = orotate + a quinol. Its pathway is pyrimidine metabolism; UMP biosynthesis via de novo pathway; orotate from (S)-dihydroorotate (quinone route): step 1/1. Functionally, catalyzes the conversion of dihydroorotate to orotate with quinone as electron acceptor. This Helicobacter pylori (strain G27) protein is Dihydroorotate dehydrogenase (quinone).